Reading from the N-terminus, the 163-residue chain is Small ribosomal subunit protein uS5 (163 aa).

An S5 DRBM domain is found at 11–74 (LTDRVVHINR…EQAKKNLIRV (64 aa)).

The protein belongs to the universal ribosomal protein uS5 family. In terms of assembly, part of the 30S ribosomal subunit. Contacts proteins S4 and S8.

Functionally, with S4 and S12 plays an important role in translational accuracy. Its function is as follows. Located at the back of the 30S subunit body where it stabilizes the conformation of the head with respect to the body. In Syntrophotalea carbinolica (strain DSM 2380 / NBRC 103641 / GraBd1) (Pelobacter carbinolicus), this protein is Small ribosomal subunit protein uS5.